The sequence spans 356 residues: Alanine racemase (356 aa).

K35 acts as the Proton acceptor; specific for D-alanine in catalysis. K35 bears the N6-(pyridoxal phosphate)lysine mark. R130 is a substrate binding site. The Proton acceptor; specific for L-alanine role is filled by Y253. M301 provides a ligand contact to substrate.

Belongs to the alanine racemase family. Pyridoxal 5'-phosphate is required as a cofactor.

It catalyses the reaction L-alanine = D-alanine. Its pathway is amino-acid biosynthesis; D-alanine biosynthesis; D-alanine from L-alanine: step 1/1. In terms of biological role, catalyzes the interconversion of L-alanine and D-alanine. May also act on other amino acids. The polypeptide is Alanine racemase (alr) (Erwinia tasmaniensis (strain DSM 17950 / CFBP 7177 / CIP 109463 / NCPPB 4357 / Et1/99)).